Reading from the N-terminus, the 396-residue chain is FAD-dependent monooxygenase phomE' (396 aa).

E3 contacts FAD. Active-site residues include R158 and Y196. Residues D277 and G290 each contribute to the FAD site.

This sequence belongs to the paxM FAD-dependent monooxygenase family. Monomer. FAD is required as a cofactor.

FAD-dependent monooxygenase; part of the gene cluster that mediates the biosynthesis of the phomopsins, a group of hexapeptide mycotoxins which infects lupins and causes lupinosis disease in livestock. The role of phomE' within the phomopsins biosynthesis pathway has still to be determined. The pathway starts with the processing of the precursor phomA by several endopeptidases including kexin proteases as well as the cluster-specific S41 family peptidase phomP1 and the oligopeptidase phomG to produce 10 identical copies of the hexapeptide Tyr-Val-Ile-Pro-Ile-Asp. After being excised from the precursor peptide, the core peptides are cyclized and modified post-translationally by enzymes encoded within the gene cluster. The timing and order of proteolysis of the phomA precursor and PTMs are still unknown. Two tyrosinase-like enzymes, phomQ1 and phomQ2, catalyze the chlorination and hydroxylation of Tyr, respectively. PhomYb, is proposed to be involved in the construction of the macrocyclic structure. The other 4 ustYa family proteins may be involved in PTMs that generate the unique structure of phomopsin A. PhomYa is required for the hydroxylation of C-beta of Tyr. PhomYc, phomYd, and phomYe are responsible for the biosynthesis of 2,3-dehydroisoleucine (dIle), 2,3-dehydroaspartic acid (dAsp), and 3,4-dehydroproline (dPro), respectively. While dIle formation by phomYc is indispensable for the installation of dAsp by phomYd, the order of the other PTMs have not been elucidated yet. Most of the biosynthetic enzymes likely have broad substrate specificity, and thus, there might be a metabolic grid from a precursor to phomopsin A. The enzyme(s) responsible for the biosynthesis of 3,4-dehydrovaline (dVal) have also not been identified yet. Finally, phomM acts as an S-adenosylmethionine-dependent alpha-N-methyltransferase that catalyzes two successive N-methylation reactions, converting N-desmethyl-phomopsin A to phomopsin A and phomopsin A further to an N,N-dimethylated congener called phomopsin E. This is FAD-dependent monooxygenase phomE' from Diaporthe leptostromiformis (Lupinosis disease fungus).